A 127-amino-acid polypeptide reads, in one-letter code: MDVFKKGFSIAKEGVVGAVEKTKQGVTEAAEKTKEGVMYVGAKTKENVVQSVTSVAEKTKEQANAVSEAVVSSVNTVATKTVEEAENIAVTSGVVRKEDLRPSAPQQEGEASKEKEEVAEEAQSGGD.

Tandem repeats lie at residues 20 to 30 (EKTKQGVTEAA) and 31 to 41 (EKTKEGVMYVG). The 4 X 11 AA tandem repeats of [EGSA]-K-T-K-[EQ]-[GQ]-V-X(4) stretch occupies residues 20 to 67 (EKTKQGVTEAAEKTKEGVMYVGAKTKENVVQSVTSVAEKTKEQANAVS). Residues 42 to 56 (AKTKENVVQSVTSVA) form a 3; approximate repeat. Copy 4 of the repeat occupies 57–67 (EKTKEQANAVS). Residues serine 67 and serine 72 each carry the phosphoserine modification. Positions 96 to 127 (RKEDLRPSAPQQEGEASKEKEEVAEEAQSGGD) are disordered. Position 124 is a phosphoserine; by BARK1, CaMK2 and CK2 (serine 124).

This sequence belongs to the synuclein family. May be a centrosome-associated protein. Interacts with MYOC; affects its secretion and its aggregation. Post-translationally, phosphorylated. Phosphorylation by GRK5 appears to occur on residues distinct from the residue phosphorylated by other kinases. Highly expressed in brain, particularly in the substantia nigra. Also expressed in the corpus callosum, heart, skeletal muscle, ovary, testis, colon and spleen. Weak expression in pancreas, kidney and lung.

It is found in the cytoplasm. The protein localises to the perinuclear region. Its subcellular location is the cytoskeleton. It localises to the microtubule organizing center. The protein resides in the centrosome. It is found in the spindle. In terms of biological role, plays a role in neurofilament network integrity. May be involved in modulating axonal architecture during development and in the adult. In vitro, increases the susceptibility of neurofilament-H to calcium-dependent proteases. May also function in modulating the keratin network in skin. Activates the MAPK and Elk-1 signal transduction pathway. The polypeptide is Gamma-synuclein (SNCG) (Homo sapiens (Human)).